A 192-amino-acid chain; its full sequence is Adenylate kinase (192 aa).

10-15 serves as a coordination point for ATP; it reads GAGKGT. Positions 30-56 are NMP; that stretch reads GTGGMLRALEPESGEQIHLRIDRGHFA. Residues threonine 31, arginine 36, 82–85, and glutamine 89 contribute to the AMP site; that span reads GFPR. Residues 123 to 133 form an LID region; sequence KRGETENRADD. Arginine 124 contributes to the ATP binding site. Arginine 130 and arginine 141 together coordinate AMP. ATP is bound at residue aspartate 169.

The protein belongs to the adenylate kinase family. In terms of assembly, monomer.

It is found in the cytoplasm. The catalysed reaction is AMP + ATP = 2 ADP. It functions in the pathway purine metabolism; AMP biosynthesis via salvage pathway; AMP from ADP: step 1/1. Functionally, catalyzes the reversible transfer of the terminal phosphate group between ATP and AMP. Plays an important role in cellular energy homeostasis and in adenine nucleotide metabolism. The sequence is that of Adenylate kinase from Rhodopirellula baltica (strain DSM 10527 / NCIMB 13988 / SH1).